The chain runs to 117 residues: Protein OPG035 (117 aa).

The protein belongs to the poxviridae OPG035 family.

Bcl-2-like protein which contributes to virulence by preventing host NF-kappa-B activation in response to pro-inflammatory stimuli such as TNF-alpha or IL1B. The protein is Protein OPG035 (OPG035) of Homo sapiens (Human).